We begin with the raw amino-acid sequence, 390 residues long: Transforming growth factor beta-1 proprotein (390 aa).

Positions 1–29 (MPPSGLRLLPLLLPLLWLLVLTPGRPAAG) are cleaved as a signal peptide. The straightjacket domain stretch occupies residues 30–74 (LSTCKTIDMELVKRKRIEAIRGQILSKLRLASPPSQGEVPPGPLP). The interval 75 to 271 (EAVLALYNST…ATPLERAQHL (197 aa)) is arm domain. Residues Asn82, Asn136, and Asn176 are each glycosylated (N-linked (GlcNAc...) asparagine). Residues 226–252 (DSRDNTLQVDINGFTTGRRGDLATIHG) are bowtie tail. The Cell attachment site motif lies at 244–246 (RGD). Disulfide bonds link Cys285/Cys294, Cys293/Cys356, Cys322/Cys387, and Cys326/Cys389.

This sequence belongs to the TGF-beta family. In terms of assembly, homodimer; disulfide-linked. Interacts with the serine proteases, HTRA1 and HTRA3: the interaction with either inhibits TGFB1-mediated signaling and the HTRA protease activity is required for this inhibition. May interact with THSD4; this interaction may lead to sequestration by FBN1 microfibril assembly and attenuation of TGFB signaling. Interacts with CD109, DPT and ASPN. Interacts with EFEMP2. Interacts with TSKU; the interaction contributes to regulation of the hair cycle. Homodimer; disulfide-linked. Interacts with transforming growth factor beta-1 (TGF-beta-1) chain; interaction is non-covalent and maintains TGF-beta-1 in a latent state; each latency-associated peptide (LAP) monomer interacts with TGF-beta-1 in the other monomer. Interacts with LTBP1; leading to regulation of TGF-beta-1 activation. Interacts with LRRC32/GARP; leading to regulation of TGF-beta-1 activation on the surface of activated regulatory T-cells (Tregs). Interacts with LRRC33/NRROS; leading to regulation of TGF-beta-1 in macrophages and microglia. Interacts (via cell attachment site) with integrins ITGAV and ITGB6 (ITGAV:ITGB6), leading to release of the active TGF-beta-1. Interacts with NREP; the interaction results in a decrease in TGFB1 autoinduction. Interacts with HSP90AB1; inhibits latent TGFB1 activation. Interact with PSG9; leading to TGFB1 activation. Interacts with TGFBR3. As to quaternary structure, homodimer; disulfide-linked. Interacts with TGF-beta receptors (TGFBR1 and TGFBR2), leading to signal transduction. Transforming growth factor beta-1 proprotein: The precursor proprotein is cleaved in the Golgi apparatus by FURIN to form Transforming growth factor beta-1 (TGF-beta-1) and Latency-associated peptide (LAP) chains, which remain non-covalently linked, rendering TGF-beta-1 inactive. In terms of processing, N-glycosylated. Deglycosylation leads to activation of Transforming growth factor beta-1 (TGF-beta-1); mechanisms triggering deglycosylation-driven activation of TGF-beta-1 are however unclear. Highly expressed in bone. Abundantly expressed in articular cartilage and chondrocytes and is increased in osteoarthritis (OA). Colocalizes with ASPN in chondrocytes within OA lesions of articular cartilage.

The protein localises to the secreted. Its subcellular location is the extracellular space. The protein resides in the extracellular matrix. In terms of biological role, transforming growth factor beta-1 proprotein: Precursor of the Latency-associated peptide (LAP) and Transforming growth factor beta-1 (TGF-beta-1) chains, which constitute the regulatory and active subunit of TGF-beta-1, respectively. Required to maintain the Transforming growth factor beta-1 (TGF-beta-1) chain in a latent state during storage in extracellular matrix. Associates non-covalently with TGF-beta-1 and regulates its activation via interaction with 'milieu molecules', such as LTBP1, LRRC32/GARP and LRRC33/NRROS, that control activation of TGF-beta-1. Interaction with LRRC33/NRROS regulates activation of TGF-beta-1 in macrophages and microglia. Interaction with LRRC32/GARP controls activation of TGF-beta-1 on the surface of activated regulatory T-cells (Tregs). Interaction with integrins (ITGAV:ITGB6 or ITGAV:ITGB8) results in distortion of the Latency-associated peptide chain and subsequent release of the active TGF-beta-1. Functionally, multifunctional protein that regulates the growth and differentiation of various cell types and is involved in various processes, such as normal development, immune function, microglia function and responses to neurodegeneration. Activation into mature form follows different steps: following cleavage of the proprotein in the Golgi apparatus, Latency-associated peptide (LAP) and Transforming growth factor beta-1 (TGF-beta-1) chains remain non-covalently linked rendering TGF-beta-1 inactive during storage in extracellular matrix. At the same time, LAP chain interacts with 'milieu molecules', such as LTBP1, LRRC32/GARP and LRRC33/NRROS that control activation of TGF-beta-1 and maintain it in a latent state during storage in extracellular milieus. TGF-beta-1 is released from LAP by integrins (ITGAV:ITGB6 or ITGAV:ITGB8): integrin-binding to LAP stabilizes an alternative conformation of the LAP bowtie tail and results in distortion of the LAP chain and subsequent release of the active TGF-beta-1. Once activated following release of LAP, TGF-beta-1 acts by binding to TGF-beta receptors (TGFBR1 and TGFBR2), which transduce signal. While expressed by many cells types, TGF-beta-1 only has a very localized range of action within cell environment thanks to fine regulation of its activation by Latency-associated peptide chain (LAP) and 'milieu molecules'. Plays an important role in bone remodeling: acts as a potent stimulator of osteoblastic bone formation, causing chemotaxis, proliferation and differentiation in committed osteoblasts. Can promote either T-helper 17 cells (Th17) or regulatory T-cells (Treg) lineage differentiation in a concentration-dependent manner. At high concentrations, leads to FOXP3-mediated suppression of RORC and down-regulation of IL-17 expression, favoring Treg cell development. At low concentrations in concert with IL-6 and IL-21, leads to expression of the IL-17 and IL-23 receptors, favoring differentiation to Th17 cells. Stimulates sustained production of collagen through the activation of CREB3L1 by regulated intramembrane proteolysis (RIP). Mediates SMAD2/3 activation by inducing its phosphorylation and subsequent translocation to the nucleus. Positively regulates odontoblastic differentiation in dental papilla cells, via promotion of IPO7-mediated translocation of phosphorylated SMAD2 to the nucleus and subsequent transcription of target genes. Can induce epithelial-to-mesenchymal transition (EMT) and cell migration in various cell types. This chain is Transforming growth factor beta-1 proprotein, found in Homo sapiens (Human).